A 129-amino-acid chain; its full sequence is D-ribose pyranase (129 aa).

Residue histidine 20 is the Proton donor of the active site. Residues aspartate 28, histidine 96, and 118–120 (YAN) each bind substrate.

Belongs to the RbsD / FucU family. RbsD subfamily. As to quaternary structure, homodecamer.

Its subcellular location is the cytoplasm. The catalysed reaction is beta-D-ribopyranose = beta-D-ribofuranose. It participates in carbohydrate metabolism; D-ribose degradation; D-ribose 5-phosphate from beta-D-ribopyranose: step 1/2. Catalyzes the interconversion of beta-pyran and beta-furan forms of D-ribose. The sequence is that of D-ribose pyranase from Staphylococcus haemolyticus (strain JCSC1435).